A 112-amino-acid polypeptide reads, in one-letter code: B3 domain-containing protein At1g43171 (112 aa).

Positions 19 to 112 (DIVGNVALPK…FENKFIVLNF (94 aa)) form a DNA-binding region, TF-B3.

Its subcellular location is the nucleus. This Arabidopsis thaliana (Mouse-ear cress) protein is B3 domain-containing protein At1g43171.